The chain runs to 89 residues: MRSTFAVLFLALIALTYSKNYQDVKEEIKNEVENEILRDLGEDDDELDDNAQEAVNDARPLRRFFRKFRGRKILPYMPSLINIWKAGKK.

Residues 1–18 (MRSTFAVLFLALIALTYS) form the signal peptide. Positions 19–59 (KNYQDVKEEIKNEVENEILRDLGEDDDELDDNAQEAVNDAR) are excised as a propeptide. Ala86 bears the Alanine amide mark.

Belongs to the arminin family. In terms of tissue distribution, expressed in entodermal epithelium along the body column.

It localises to the secreted. The protein resides in the target cell membrane. In terms of biological role, antimicrobial peptide with a broad-spectrum antimicrobial activity. Keeps its antibacterial activity under a wide range of salt concentrations that mimic physiological conditions of human blood, which is surprising, since Hydra is an obligate freshwater animal with nearly no salt tolerance. Does not affect red blood cells. This chain is Arminin 7519, found in Hydra vulgaris (Hydra).